The chain runs to 150 residues: Large ribosomal subunit protein bL9 (150 aa).

It belongs to the bacterial ribosomal protein bL9 family.

Binds to the 23S rRNA. In Streptococcus gordonii (strain Challis / ATCC 35105 / BCRC 15272 / CH1 / DL1 / V288), this protein is Large ribosomal subunit protein bL9.